The chain runs to 778 residues: Protein translocase subunit SecA 2 (778 aa).

Residues Q94, 112 to 116 (GEGKT), and D501 each bind ATP.

Belongs to the SecA family. Monomer and homodimer. Part of the essential Sec protein translocation apparatus which comprises SecA, SecYEG and auxiliary proteins SecDF. Other proteins may also be involved.

The protein resides in the cell membrane. Its subcellular location is the cytoplasm. The enzyme catalyses ATP + H2O + cellular proteinSide 1 = ADP + phosphate + cellular proteinSide 2.. Functionally, part of the Sec protein translocase complex. Interacts with the SecYEG preprotein conducting channel. Has a central role in coupling the hydrolysis of ATP to the transfer of proteins into and across the cell membrane, serving as an ATP-driven molecular motor driving the stepwise translocation of polypeptide chains across the membrane. The protein is Protein translocase subunit SecA 2 of Mycobacterium leprae (strain TN).